The primary structure comprises 509 residues: MELKKSPDGGWGWVIVFVSFFTQFLCYGSPLAVGVLYIEWLDAFGEGKGKTAWVGSLASGVGLLASPVCSLCVSSFGARPVTIFSGFMVAGGLMLSSFAPNIYFLFFSYGIVVGLGCGLLYTATVTITCLYFDDRRGLALGLISTGSSVGLFIYAALQRMLVEFYGLDGCLLIVGALALNILACGSLMRPLQSSDCPLPKKIAPEDLPDKYSIYNEKGKNLEENINILEKSYSSEEKCRTTLANGDWKQDSLLHKNPTVTHTKEPETYKKKVAEQTYFCKQLAKRKWQLYKNYCGETVALFKNKVFSALFIAILLFDIGGFPPSLLMEDVARSSNVKEEEFIMPLISIIGIMTAVGKLLLGILADFKWINTLYLYVATLIIMGLALCAIPFAKSYVTLALLSGILGFLTGNWSIFPYVTTKTVGIEKLAHAYGILMFFAGLGNSLGPPIVGWFYDWTQTYEIAFYFSGFCVLLGGFILLLAALPSWDTCNKQLPKPAPTTFLYKVASNV.

Over 1–12 (MELKKSPDGGWG) the chain is Cytoplasmic. The next 12 helical transmembrane spans lie at 13-33 (WVIV…PLAV), 53-73 (WVGS…SLCV), 80-100 (PVTI…SFAP), 102-122 (IYFL…LLYT), 137-157 (GLAL…YAAL), 164-184 (FYGL…ILAC), 305-325 (VFSA…PPSL), 342-362 (IMPL…LLGI), 372-392 (LYLY…IPFA), 398-418 (LALL…FPYV), 433-453 (GILM…VGWF), and 462-482 (IAFY…LLAA). Residues 483-509 (LPSWDTCNKQLPKPAPTTFLYKVASNV) lie on the Cytoplasmic side of the membrane.

It belongs to the major facilitator superfamily. Monocarboxylate porter (TC 2.A.1.13) family.

The protein resides in the cell membrane. It carries out the reaction creatine(in) = creatine(out). The catalysed reaction is (R)-carnitine(in) = (R)-carnitine(out). In terms of biological role, extracellular pH-and Na(+)-sensitive low-affinity creatine transporter. Also functions as a pH-independent carnitine efflux transporter. This is Monocarboxylate transporter 9 (SLC16A9) from Pongo abelii (Sumatran orangutan).